The primary structure comprises 107 residues: Large ribosomal subunit protein uL24 (107 aa).

This sequence belongs to the universal ribosomal protein uL24 family. Part of the 50S ribosomal subunit.

Its function is as follows. One of two assembly initiator proteins, it binds directly to the 5'-end of the 23S rRNA, where it nucleates assembly of the 50S subunit. In terms of biological role, one of the proteins that surrounds the polypeptide exit tunnel on the outside of the subunit. This is Large ribosomal subunit protein uL24 from Nitratidesulfovibrio vulgaris (strain ATCC 29579 / DSM 644 / CCUG 34227 / NCIMB 8303 / VKM B-1760 / Hildenborough) (Desulfovibrio vulgaris).